Here is a 325-residue protein sequence, read N- to C-terminus: Mitochondrial thiamine pyrophosphate carrier 1 (325 aa).

Solcar repeat units follow at residues 12 to 111 (GSRL…TTLL), 122 to 209 (PPSA…LRPH), and 216 to 312 (PFSS…ALKF). The next 6 membrane-spanning stretches (helical) occupy residues 17-35 (VTAA…IAPL), 92-108 (LLYV…YRTT), 127-143 (SFVA…AATY), 184-200 (VWDR…SFFF), 223-239 (VART…TFPL), and 287-304 (GLTV…VTMW).

This sequence belongs to the mitochondrial carrier (TC 2.A.29) family.

The protein localises to the mitochondrion inner membrane. Its function is as follows. Mitochondrial transporter that mediates uptake of thiamine pyrophosphate (ThPP) into mitochondria. This is Mitochondrial thiamine pyrophosphate carrier 1 (TPC1) from Chaetomium globosum (strain ATCC 6205 / CBS 148.51 / DSM 1962 / NBRC 6347 / NRRL 1970) (Soil fungus).